Reading from the N-terminus, the 206-residue chain is N-(5'-phosphoribosyl)anthranilate isomerase (206 aa).

The protein belongs to the TrpF family.

It catalyses the reaction N-(5-phospho-beta-D-ribosyl)anthranilate = 1-(2-carboxyphenylamino)-1-deoxy-D-ribulose 5-phosphate. It functions in the pathway amino-acid biosynthesis; L-tryptophan biosynthesis; L-tryptophan from chorismate: step 3/5. This is N-(5'-phosphoribosyl)anthranilate isomerase from Nitrosococcus oceani (strain ATCC 19707 / BCRC 17464 / JCM 30415 / NCIMB 11848 / C-107).